A 628-amino-acid polypeptide reads, in one-letter code: MDTTMVNLWTLFEQLVRRMEIINEGNESIEFIQVVKDFEDFRKKYQRTNQELEKFKDLLLKAETGRSALDVKLKHARNQVDVEIKRRQRAEAECAKLEQQIQLIRDILMCDTSGSIQLSEEQKSALAFLNRGQASSGHAGNNRLSTIDESGSILSDISFDKTDESLDWDSSLVKNFKMKKREKRRSNSRQFIDGPPGPVKKTCSIGSTVDQANESIVAKTTVTVPSDGGPIEAVSTIETLPSWTRSRGKSGPLQPVNSDSALNSRPLEPRTDTDNLGTPQNTGGMRLHDFVSKTVIKPESCVPCGKRIKFGKLSLKCRDCRLVSHPECRDRCPLPCIPPLVGTPVKIGEGMLADFVSQASPMIPAIVVSCVNEIEQRGLTEAGLYRISGCDRTVKELKEKFLKVKTVPLLSKVDDIHVICSLLKDFLRNLKEPLLTFWLSKAFMEAAEITDEDNSTAAMYQAVSELPQANRDTLAFLMIHLQRVSQSPDTKMDIANLAKVFGPTIVAHTVPNPDPVTMFQDIKRQLKVVERLLSLPLEYWNQFMMVDQENIDSQRGNGNSTPRTPDVKVSLLGPVTTPEFQLVKTPLSSSLSQRLYNLSKSTPRFGNKSKSATNLGQQGKFFPAPYLK.

At methionine 1 the chain carries N-acetylmethionine. Residues 33–110 (QVVKDFEDFR…IQLIRDILMC (78 aa)) are a coiled coil. The segment at 107–286 (ILMCDTSGSI…GTPQNTGGMR (180 aa)) is interaction with SLC26A8. Phosphoserine; by PLK1 is present on serine 150. Residue serine 155 is modified to Phosphoserine. Residue serine 158 is modified to Phosphoserine; by PLK1. Threonine 162 carries the phosphothreonine modification. Phosphoserine; by PLK1 is present on residues serine 165 and serine 171. The segment at 179–201 (KKREKRRSNSRQFIDGPPGPVKK) is disordered. Phosphoserine occurs at positions 204, 207, and 215. A disordered region spans residues 242-284 (SWTRSRGKSGPLQPVNSDSALNSRPLEPRTDTDNLGTPQNTGG). Lysine 249 participates in a covalent cross-link: Glycyl lysine isopeptide (Lys-Gly) (interchain with G-Cter in SUMO2). At serine 258 the chain carries Phosphoserine. Over residues 274–283 (DNLGTPQNTG) the composition is skewed to polar residues. The Phorbol-ester/DAG-type zinc-finger motif lies at 287–336 (LHDFVSKTVIKPESCVPCGKRIKFGKLSLKCRDCRLVSHPECRDRCPLPC). Threonine 343 carries the post-translational modification Phosphothreonine. Residues 350–540 (GMLADFVSQA…RLLSLPLEYW (191 aa)) form the Rho-GAP domain. Serine 388 carries the post-translational modification Phosphoserine; by AURKB. A Glycyl lysine isopeptide (Lys-Gly) (interchain with G-Cter in SUMO2) cross-link involves residue lysine 405. Serine 411 bears the Phosphoserine; by AURKB mark. Phosphothreonine occurs at positions 564, 577, 585, and 602.

Heterotetramer of two molecules each of RACGAP1 and KIF23. Found in the centralspindlin complex. Associates with alpha-, beta- and gamma-tubulin and microtubules. Interacts via its Rho-GAP domain with RND2. Associates with AURKB during M phase. Interacts via its Rho-GAP domain and basic region with PRC1. The interaction with PRC1 inhibits its GAP activity towards CDC42 in vitro, which may be required for maintaining normal spindle morphology. Interacts with SLC26A8 via its N-terminus. Interacts with ECT2; the interaction is direct, occurs at anaphase and during cytokinesis in a microtubule-dependent manner, is enhanced by phosphorylation by PLK1 and phosphorylation at Ser-165 plays a major role in mediating binding. Interacts with RAB11FIP3; the interaction occurs at late telophase. Interacts with KIF23; the interaction is direct. Post-translationally, phosphorylated at multiple sites in the midbody during cytokinesis. Phosphorylation by AURKB on Ser-388 at the midbody is, at least in part, responsible for exerting its latent GAP activity towards RhoA. Phosphorylation on multiple serine residues by PLK1 enhances its association with ECT2 and is critical for cleavage furrow formation. Phosphorylation on Ser-165 plays a major role in mediating interaction with ECT2. Phosphorylation on Ser-158 does not appear to contribute to binding to ECT2. As to expression, highly expressed in testis, thymus and spleen and weakly expressed in brain, heart, skeletal muscle and kidney. In testis, expression is restricted to germ cells with the highest levels of expression found in spermatocytes. Not detected in adult liver. Also expressed in fetal liver and in several hematopoietic cell lines.

The protein resides in the nucleus. It is found in the cytoplasm. Its subcellular location is the cytoskeleton. The protein localises to the spindle. It localises to the cytoplasmic vesicle. The protein resides in the secretory vesicle. It is found in the acrosome. Its subcellular location is the cleavage furrow. The protein localises to the midbody. It localises to the midbody ring. The protein resides in the cell membrane. Its function is as follows. Component of the centralspindlin complex that serves as a microtubule-dependent and Rho-mediated signaling required for the myosin contractile ring formation during the cell cycle cytokinesis. Required for proper attachment of the midbody to the cell membrane during cytokinesis. Sequentially binds to ECT2 and RAB11FIP3 which regulates cleavage furrow ingression and abscission during cytokinesis. Plays key roles in controlling cell growth and differentiation of hematopoietic cells through mechanisms other than regulating Rac GTPase activity. Has a critical role in erythropoiesis. Also involved in the regulation of growth-related processes in adipocytes and myoblasts. May be involved in regulating spermatogenesis and in the RACGAP1 pathway in neuronal proliferation. Shows strong GAP (GTPase activation) activity towards CDC42 and RAC1 and less towards RHOA. Essential for the early stages of embryogenesis. May play a role in regulating cortical activity through RHOA during cytokinesis. May participate in the regulation of sulfate transport in male germ cells. This chain is Rac GTPase-activating protein 1, found in Mus musculus (Mouse).